A 505-amino-acid chain; its full sequence is Actin nucleation-promoting factor WASL (505 aa).

Ser-2 carries the post-translational modification N-acetylserine. One can recognise a WH1 domain in the interval 34–141 (LGKKCVTMSS…KAVTDLLGRR (108 aa)). Disordered stretches follow at residues 138–163 (LGRR…ATVD) and 185–205 (TKEK…DIGT). Basic residues predominate over residues 186-198 (KEKKKGKAKKKRL). One can recognise a CRIB domain in the interval 203–216 (IGTPSNFQHIGHVG). At Ser-242 the chain carries Phosphoserine; by TNK2. Phosphotyrosine; by FAK1 and TNK2 is present on Tyr-256. Disordered stretches follow at residues 266–406 (EAVK…AGSK), 449–468 (SVTD…SGIV), and 477–505 (KRSK…EWED). 3 stretches are compositionally biased toward pro residues: residues 276-349 (APPP…PLPA), 356-365 (SGPPPPPPPL), and 372-391 (APPP…PPGL). Arg-307 carries the post-translational modification Omega-N-methylarginine. 2 WH2 domains span residues 405-422 (SKAA…LKKV) and 433-450 (GRDA…LKSV). Phosphoserine is present on residues Ser-484 and Ser-485. Acidic residues predominate over residues 486–505 (DEDEDEDDDEDFEDDDEWED).

As to quaternary structure, binds actin and the Arp2/3 complex. Interacts with CDC42. Interacts with FCHSD1. Interacts with FCHSD2. Binds to SH3 domains of GRB2. Interacts with the C-terminal SH3 domain of DNMBP. Interacts with SNX9. Interacts with the WW domains of PRPF40A/FBP11. Interacts with PTK2/FAK1. Interacts with PACSIN1, PACSIN2 and PACSIN3. Interacts with NOSTRIN. Binds to TNK2. Interacts with SNX33. Interacts with NONO (via second RRM domain); the interaction is direct. Component of a multiprotein complex with NONO and SFPQ; associates with the complex via direct interaction with NONO. Post-translationally, phosphorylation at Ser-242, Tyr-256, Ser-484 and Ser-485 enhances actin polymerization activity.

Its subcellular location is the cytoplasm. It is found in the cytoskeleton. It localises to the nucleus. Functionally, regulates actin polymerization by stimulating the actin-nucleating activity of the Arp2/3 complex. Involved in various processes, such as mitosis and cytokinesis, via its role in the regulation of actin polymerization. Together with CDC42, involved in the extension and maintenance of the formation of thin, actin-rich surface projections called filopodia. In addition to its role in the cytoplasm, also plays a role in the nucleus by regulating gene transcription, probably by promoting nuclear actin polymerization. Binds to HSF1/HSTF1 and forms a complex on heat shock promoter elements (HSE) that negatively regulates HSP90 expression. Plays a role in dendrite spine morphogenesis. This Bos taurus (Bovine) protein is Actin nucleation-promoting factor WASL (WASL).